The chain runs to 197 residues: MAVRPICIVGDPVLHTATEPIPVGPDGSLPADLADLITDLYDTMDAAHGVGLAANQIGVNKRVFVYDCADARKKTVRRRGVVVNPVLETSEVPETMPDPEDDDEGCLSVPGESFPTGRADWARVTGLDADGTPITIEGTDLFARMLQHETGHLDGFLYLDSLIGRNARAAKRAVKSHGWGVPGLTWMPGEDPDPFGH.

Fe cation-binding residues include Cys106 and His148. Glu149 is an active-site residue. His152 is a binding site for Fe cation.

The protein belongs to the polypeptide deformylase family. Requires Fe(2+) as cofactor.

It catalyses the reaction N-terminal N-formyl-L-methionyl-[peptide] + H2O = N-terminal L-methionyl-[peptide] + formate. Its function is as follows. Removes the formyl group from the N-terminal Met of newly synthesized proteins. Requires at least a dipeptide for an efficient rate of reaction. N-terminal L-methionine is a prerequisite for activity but the enzyme has broad specificity at other positions. The polypeptide is Peptide deformylase (Mycolicibacterium gilvum (strain PYR-GCK) (Mycobacterium gilvum (strain PYR-GCK))).